Here is a 283-residue protein sequence, read N- to C-terminus: Cardiolipin synthase (CMP-forming) (283 aa).

3 helical membrane passes run 83-103, 155-175, and 209-229; these read PFIG…LFAF, VSIA…ALFI, and LSKW…LLLL.

The protein belongs to the CDP-alcohol phosphatidyltransferase class-I family. In terms of assembly, may be found in a large complex. Mg(2+) is required as a cofactor.

The protein resides in the mitochondrion inner membrane. The enzyme catalyses a CDP-1,2-diacyl-sn-glycerol + a 1,2-diacyl-sn-glycero-3-phospho-(1'-sn-glycerol) = a cardiolipin + CMP + H(+). Catalyzes the synthesis of cardiolipin (CL) (diphosphatidylglycerol) by specifically transferring a phosphatidyl group from CDP-diacylglycerol to phosphatidylglycerol (PG). CL is a key phospholipid in mitochondrial membranes and plays important roles in maintaining the functional integrity and dynamics of mitochondria under both optimal and stress conditions. The chain is Cardiolipin synthase (CMP-forming) (CRD1) from Saccharomyces cerevisiae (strain ATCC 204508 / S288c) (Baker's yeast).